The primary structure comprises 586 residues: ATPase family AAA domain-containing protein 3A (586 aa).

Disordered regions lie at residues 1 to 55 and 111 to 134; these read MSWL…PTGL and QAEE…QYQD. Residue serine 2 is modified to N-acetylserine. A required for interaction with the inner surface of the mitochondrial outer membrane region spans residues 2 to 50; the sequence is SWLFGINKGPKGEGAGPPPPLPPAQPGAEGGGDRGLGDRPAPKDKWSNF. Topologically, residues 2–246 are mitochondrial intermembrane; the sequence is SWLFGINKGP…FRAFVTDWDK (245 aa). Positions 17 to 26 are enriched in pro residues; it reads GPPPPLPPAQ. Composition is skewed to basic and acidic residues over residues 32–48 and 111–125; these read GGDR…DKWS and QAEE…ETRQ. Positions 86-219 form a coiled coil; it reads QLEQQSKLKE…QIRLKAAEHR (134 aa). Residues 247 to 264 form a helical membrane-spanning segment; that stretch reads VTATVAGLTLLAVGVYSA. Over 265-586 the chain is Mitochondrial matrix; that stretch reads KNATLVAGRF…PGRGDEPSPS (322 aa). The S100B-binding stretch occupies residues 290–305; sequence RITVLEALRHPIQVSR. Serine 321 is subject to Phosphoserine. Residue 352–359 coordinates ATP; the sequence is GPPGTGKT. Residue lysine 491 is modified to N6-acetyllysine.

It belongs to the AAA ATPase family. Can form homooligomers. Homodimer formation at the N-terminus may be regulated by ATP and is required for the interaction with the inner surface of the mitochondrial outer membrane and correct mitochondrial homeostasis. Interacts with components of the mitochondrial ribosome and with other proteins involved in mitochondrial RNA metabolism. May also interact with protein involved in lipid metabolism, including STARD9. May interact with FAM210A. Interacts with GADD45GIP1. Interacts with S100B in a Ca(+2)- and Zn(+2)-dependent manner; this interaction probably occurs in the cytosol prior to mitochondrial targeting. S100B could assist ATAD3A cytoplasmic processing, preventing aggregation and favoring mitochondrial localization. Interacts with HSP60/HSPD1. Forms heterooligomers with ATAD3B; this interaction may affect ATAD3A activity. Interacts with CLPB. Interacts with EIF2AK3/PERK; ATAD3A and EIF2S1/eIF-2-alpha occupy a common binding site within the cytoplasmic loop of EIF2AK3/PERK, leading to prevent EIF2AK3/PERK association with its substrate EIF2S1/eIF-2-alpha. As to expression, overexpressed in lung adenocarcinomas (at protein level).

Its subcellular location is the mitochondrion inner membrane. It is found in the mitochondrion matrix. The protein localises to the mitochondrion nucleoid. It catalyses the reaction ATP + H2O = ADP + phosphate + H(+). Functionally, essential for mitochondrial network organization, mitochondrial metabolism and cell growth at organism and cellular level. May play an important role in mitochondrial protein synthesis. May also participate in mitochondrial DNA replication. May bind to mitochondrial DNA D-loops and contribute to nucleoid stability. Required for enhanced channeling of cholesterol for hormone-dependent steroidogenesis. Involved in mitochondrial-mediated antiviral innate immunity. Required to protect mitochondria from the PERK-mediated unfolded protein response: specifically inhibits the activity of EIF2AK3/PERK at mitochondria-endoplasmic reticulum contact sites, thereby providing a safe haven for mitochondrial protein translation during endoplasmic reticulum stress. Ability to inhibit EIF2AK3/PERK is independent of its ATPase activity. Also involved in the mitochondrial DNA damage response by promoting signaling between damaged genomes and the mitochondrial membrane, leading to activation of the integrated stress response (ISR). This chain is ATPase family AAA domain-containing protein 3A, found in Homo sapiens (Human).